Here is a 434-residue protein sequence, read N- to C-terminus: CCA tRNA nucleotidyltransferase 1, mitochondrial (434 aa).

The N-terminal 41 residues, 1-41, are a transit peptide targeting the mitochondrion; sequence MLRCLYHWHRPVLNRRWSRLCLPKQYLFTMKLQSPEFQSLF. ATP is bound by residues Gly64 and Arg67. Gly64 and Arg67 together coordinate CTP. Residues Asp77 and Asp79 each coordinate Mg(2+). 5 residues coordinate ATP: Arg151, Asp194, Arg197, Arg200, and Arg203. Arg151, Asp194, Arg197, Arg200, and Arg203 together coordinate CTP. Residue Ser400 is modified to Phosphoserine. Residue Lys402 is modified to N6-acetyllysine.

This sequence belongs to the tRNA nucleotidyltransferase/poly(A) polymerase family. Monomer, and homodimer; disulfide-linked. Mg(2+) is required as a cofactor.

It is found in the mitochondrion. Its subcellular location is the cytoplasm. The protein localises to the nucleus. The enzyme catalyses a tRNA precursor + 2 CTP + ATP = a tRNA with a 3' CCA end + 3 diphosphate. The catalysed reaction is a tRNA with a 3' CCA end + 2 CTP + ATP = a tRNA with a 3' CCACCA end + 3 diphosphate. Functionally, nucleotidyltransferase that catalyzes the addition and repair of the essential 3'-terminal CCA sequence in tRNAs, which is necessary for the attachment of amino acids to the 3' terminus of tRNA molecules, using CTP and ATP as substrates. tRNA 3'-terminal CCA addition is required both for tRNA processing and repair. Promotes tRNA repair and recycling downstream of the ribosome-associated quality control (RQC) pathway by mediating addition of the tRNA 3'-terminal CCA following cleavage by ANKZF1 and repair by ELAC1. Also involved in tRNA surveillance by mediating tandem CCA addition to generate a CCACCA at the 3' terminus of unstable tRNAs and tRNA-like transcripts. While stable tRNAs receive only 3'-terminal CCA, unstable tRNAs beginning with GG are marked with CCACCA and rapidly degraded. The structural flexibility of RNA controls the choice between CCA versus CCACCA addition: following the first CCA addition cycle, nucleotide-binding to the active site triggers a clockwise screw motion, producing torque on the RNA. This ejects stable RNAs, whereas unstable RNAs are refolded while bound to the enzyme and subjected to a second CCA catalytic cycle. Adds 2 C residues (CC-) to the 3' terminus of tRNA molecules instead of a complete CCA end as isoform 1 does (in vitro). The protein is CCA tRNA nucleotidyltransferase 1, mitochondrial of Homo sapiens (Human).